Reading from the N-terminus, the 292-residue chain is Elongation factor Ts (292 aa).

The involved in Mg(2+) ion dislocation from EF-Tu stretch occupies residues 79-82; it reads TDFV.

The protein belongs to the EF-Ts family.

The protein localises to the cytoplasm. In terms of biological role, associates with the EF-Tu.GDP complex and induces the exchange of GDP to GTP. It remains bound to the aminoacyl-tRNA.EF-Tu.GTP complex up to the GTP hydrolysis stage on the ribosome. The polypeptide is Elongation factor Ts (Xanthomonas campestris pv. campestris (strain ATCC 33913 / DSM 3586 / NCPPB 528 / LMG 568 / P 25)).